Here is a 332-residue protein sequence, read N- to C-terminus: tRNA-dihydrouridine synthase B (332 aa).

FMN is bound by residues 16-18 (PMA) and Q70. C100 functions as the Proton donor in the catalytic mechanism. FMN is bound by residues K139, 200-202 (NGD), and 224-225 (GR).

It belongs to the Dus family. DusB subfamily. It depends on FMN as a cofactor.

The catalysed reaction is a 5,6-dihydrouridine in tRNA + NAD(+) = a uridine in tRNA + NADH + H(+). It carries out the reaction a 5,6-dihydrouridine in tRNA + NADP(+) = a uridine in tRNA + NADPH + H(+). Catalyzes the synthesis of 5,6-dihydrouridine (D), a modified base found in the D-loop of most tRNAs, via the reduction of the C5-C6 double bond in target uridines. The sequence is that of tRNA-dihydrouridine synthase B from Pasteurella multocida (strain Pm70).